We begin with the raw amino-acid sequence, 649 residues long: Endoglucanase D (649 aa).

The first 41 residues, 1-41, serve as a signal peptide directing secretion; sequence MSRMTLKSSMKKRVLSLLIAVVFLSLTGVFPSGLIETKVSA. The active-site Nucleophile is the aspartate 201. Residues histidine 516 and aspartate 546 contribute to the active site. Glutamate 555 acts as the Proton donor in catalysis. The region spanning 579 to 649 is the Dockerin domain; the sequence is NEVLYGDVND…LIRVIEKLPI (71 aa).

The protein belongs to the glycosyl hydrolase 9 (cellulase E) family. Requires Ca(2+) as cofactor.

The enzyme catalyses Endohydrolysis of (1-&gt;4)-beta-D-glucosidic linkages in cellulose, lichenin and cereal beta-D-glucans.. Its function is as follows. This enzyme catalyzes the endohydrolysis of 1,4-beta-glucosidic linkages in cellulose, lichenin and cereal beta-D-glucans. This chain is Endoglucanase D (celD), found in Acetivibrio thermocellus (strain ATCC 27405 / DSM 1237 / JCM 9322 / NBRC 103400 / NCIMB 10682 / NRRL B-4536 / VPI 7372) (Clostridium thermocellum).